The primary structure comprises 290 residues: Ribosome-inactivating protein bryodin I (290 aa).

The first 23 residues, 1–23, serve as a signal peptide directing secretion; it reads MIKLLVLWLLILTIFLKSPTVEG. Residues glutamate 183 and glutamate 212 contribute to the active site. N-linked (GlcNAc...) asparagine glycosylation is found at asparagine 214 and asparagine 250. Residues 271–290 constitute a propeptide, removed in mature form; that stretch reads AIGEDISMTLIGFEHGLYGI.

It belongs to the ribosome-inactivating protein family. Type 1 RIP subfamily. Appears to undergo proteolytic cleavage in the C-terminal to produce a shorter protein.

The catalysed reaction is Endohydrolysis of the N-glycosidic bond at one specific adenosine on the 28S rRNA.. Its function is as follows. Ribosome-inactivating protein of type 1, inhibits protein synthesis in animal cells. In Bryonia dioica (Red bryony), this protein is Ribosome-inactivating protein bryodin I.